The chain runs to 80 residues: Large ribosomal subunit protein uL29 (80 aa).

It belongs to the universal ribosomal protein uL29 family.

The polypeptide is Large ribosomal subunit protein uL29 (Mycobacterium marinum (strain ATCC BAA-535 / M)).